Consider the following 181-residue polypeptide: Organelle RRM domain-containing protein 6, chloroplastic (181 aa).

A chloroplast-targeting transit peptide spans 1–44 (MAISLGRVVVPSCTISGDRLFIPNFSAICSVSCGRINVGTGVIS). The region spanning 77-155 (TKLYVSGLSF…RVIFVEEAKT (79 aa)) is the RRM domain. Positions 155–169 (TRSDMSRAKPRRDFP) are enriched in basic and acidic residues. The tract at residues 155–181 (TRSDMSRAKPRRDFPKPQSKPRTFRTW) is disordered.

Interacts with MORF8/RIP1, MORF2/RIP2, MORF9/RIP9 and VAR3/OZ1.

The protein resides in the plastid. Its subcellular location is the chloroplast. Functionally, involved in C-to-U editing of chloroplastic RNA. Required for the photosynthetic subunit psbF transcript editing in chloroplast. The protein is Organelle RRM domain-containing protein 6, chloroplastic of Arabidopsis thaliana (Mouse-ear cress).